Reading from the N-terminus, the 337-residue chain is o-succinylbenzoate synthase (337 aa).

Lysine 142 acts as the Proton donor in catalysis. Mg(2+) is bound by residues aspartate 170, glutamate 199, and aspartate 222. Residue lysine 248 is the Proton acceptor of the active site.

Belongs to the mandelate racemase/muconate lactonizing enzyme family. MenC type 1 subfamily. The cofactor is a divalent metal cation.

It carries out the reaction (1R,6R)-6-hydroxy-2-succinyl-cyclohexa-2,4-diene-1-carboxylate = 2-succinylbenzoate + H2O. The protein operates within quinol/quinone metabolism; 1,4-dihydroxy-2-naphthoate biosynthesis; 1,4-dihydroxy-2-naphthoate from chorismate: step 4/7. It participates in quinol/quinone metabolism; menaquinone biosynthesis. Functionally, converts 2-succinyl-6-hydroxy-2,4-cyclohexadiene-1-carboxylate (SHCHC) to 2-succinylbenzoate (OSB). The polypeptide is o-succinylbenzoate synthase (Pasteurella multocida (strain Pm70)).